Consider the following 545-residue polypeptide: Tyrosine decarboxylase 2 (545 aa).

Residues 23 to 44 (GYTNGNGHTNGNGNYNGNGHVN) show a composition bias toward gly residues. Positions 23–45 (GYTNGNGHTNGNGNYNGNGHVNG) are disordered. Positions 245 and 360 each coordinate L-tyrosine. An N6-(pyridoxal phosphate)lysine modification is found at K361. Position 390 (Y390) interacts with L-tyrosine.

Belongs to the group II decarboxylase family. As to quaternary structure, homotetramer. Pyridoxal 5'-phosphate serves as cofactor. Expressed specifically in flowers.

The protein resides in the cytoplasm. It carries out the reaction L-tyrosine + H(+) = tyramine + CO2. In terms of biological role, converts tyrosine into tyramine, a precursor of isoquinoline alkaloids and various amides. This chain is Tyrosine decarboxylase 2, found in Arabidopsis thaliana (Mouse-ear cress).